A 338-amino-acid polypeptide reads, in one-letter code: D-erythrose-4-phosphate dehydrogenase (338 aa).

Residue 11–12 participates in NAD(+) binding; the sequence is RI. Substrate-binding positions include 153 to 155, Arg-199, 212 to 213, and Arg-235; these read SCT and TK. Catalysis depends on Cys-154, which acts as the Nucleophile. Asn-317 is an NAD(+) binding site.

This sequence belongs to the glyceraldehyde-3-phosphate dehydrogenase family. Epd subfamily. In terms of assembly, homotetramer.

Its subcellular location is the cytoplasm. The catalysed reaction is D-erythrose 4-phosphate + NAD(+) + H2O = 4-phospho-D-erythronate + NADH + 2 H(+). The protein operates within cofactor biosynthesis; pyridoxine 5'-phosphate biosynthesis; pyridoxine 5'-phosphate from D-erythrose 4-phosphate: step 1/5. Catalyzes the NAD-dependent conversion of D-erythrose 4-phosphate to 4-phosphoerythronate. The protein is D-erythrose-4-phosphate dehydrogenase of Shewanella sp. (strain MR-4).